The following is a 309-amino-acid chain: HPr kinase/phosphorylase (309 aa).

Catalysis depends on residues H138 and K159. Position 153–160 (153–160 (GDSGIGKS)) interacts with ATP. S160 serves as a coordination point for Mg(2+). The Proton acceptor; for phosphorylation activity. Proton donor; for dephosphorylation activity role is filled by D177. Residues 201–210 (LEIRGVGIID) are important for the catalytic mechanism of both phosphorylation and dephosphorylation. E202 contributes to the Mg(2+) binding site. R243 is an active-site residue. The interval 264 to 269 (PVKTGR) is important for the catalytic mechanism of dephosphorylation.

Belongs to the HPrK/P family. As to quaternary structure, homohexamer. Mg(2+) is required as a cofactor.

It carries out the reaction [HPr protein]-L-serine + ATP = [HPr protein]-O-phospho-L-serine + ADP + H(+). The catalysed reaction is [HPr protein]-O-phospho-L-serine + phosphate + H(+) = [HPr protein]-L-serine + diphosphate. Catalyzes the ATP- as well as the pyrophosphate-dependent phosphorylation of a specific serine residue in HPr, a phosphocarrier protein of the phosphoenolpyruvate-dependent sugar phosphotransferase system (PTS). HprK/P also catalyzes the pyrophosphate-producing, inorganic phosphate-dependent dephosphorylation (phosphorolysis) of seryl-phosphorylated HPr (P-Ser-HPr). The two antagonistic activities of HprK/P are regulated by several intracellular metabolites, which change their concentration in response to the absence or presence of rapidly metabolisable carbon sources (glucose, fructose, etc.) in the growth medium. Therefore, by controlling the phosphorylation state of HPr, HPrK/P is a sensor enzyme that plays a major role in the regulation of carbon metabolism and sugar transport: it mediates carbon catabolite repression (CCR), and regulates PTS-catalyzed carbohydrate uptake and inducer exclusion. The chain is HPr kinase/phosphorylase from Streptococcus thermophilus (strain ATCC BAA-491 / LMD-9).